Reading from the N-terminus, the 170-residue chain is Interferon gamma (170 aa).

An N-terminal signal peptide occupies residues 1 to 20; sequence MNSRLCIMALLLCFSQALLG. Residues Asn36 and Asn103 are each glycosylated (N-linked (GlcNAc...) asparagine).

Belongs to the type II (or gamma) interferon family. As to quaternary structure, homodimer. Interacts with IFNGR1 (via extracellular domain); this interaction promotes IFNGR1 dimerization. As to expression, released primarily from activated T lymphocytes.

The protein resides in the secreted. Its function is as follows. Type II interferon produced by immune cells such as T-cells and NK cells that plays crucial roles in antimicrobial, antiviral, and antitumor responses by activating effector immune cells and enhancing antigen presentation. Primarily signals through the JAK-STAT pathway after interaction with its receptor IFNGR1 to affect gene regulation. Upon IFNG binding, IFNGR1 intracellular domain opens out to allow association of downstream signaling components JAK2, JAK1 and STAT1, leading to STAT1 activation, nuclear translocation and transcription of IFNG-regulated genes. Many of the induced genes are transcription factors such as IRF1 that are able to further drive regulation of a next wave of transcription. Plays a role in class I antigen presentation pathway by inducing a replacement of catalytic proteasome subunits with immunoproteasome subunits. In turn, increases the quantity, quality, and repertoire of peptides for class I MHC loading. Increases the efficiency of peptide generation also by inducing the expression of activator PA28 that associates with the proteasome and alters its proteolytic cleavage preference. Up-regulates as well MHC II complexes on the cell surface by promoting expression of several key molecules such as cathepsins B/CTSB, H/CTSH, and L/CTSL. Participates in the regulation of hematopoietic stem cells during development and under homeostatic conditions by affecting their development, quiescence, and differentiation. The polypeptide is Interferon gamma (IFNG) (Sigmodon hispidus (Hispid cotton rat)).